The following is a 584-amino-acid chain: Pectinesterase 3 (584 aa).

Positions 1–50 (MTRIKEFFTKLSESSTNQNISNIPKKKKKLFLALFATLLVVAAVIGIVAG) are cleaved as a signal peptide. Positions 51-266 (VNSRKNSGDN…LSTGDRRLLQ (216 aa)) are excised as a propeptide. Asparagine 108, asparagine 129, and asparagine 226 each carry an N-linked (GlcNAc...) asparagine glycan. Residues threonine 348 and glutamine 378 each coordinate substrate. The active-site Proton donor is the aspartate 401. The cysteines at positions 415 and 435 are disulfide-linked. The active-site Nucleophile is the aspartate 422. Positions 490 and 492 each coordinate substrate.

This sequence in the N-terminal section; belongs to the PMEI family. In the C-terminal section; belongs to the pectinesterase family. As to expression, in the peel, expression is localized to the region of the flavedo close to the oil glands, and to the innermost layer of the albedo. In the lamella, expression is localized to the cell layers opposing the fruit tissue, and to the parenchyma surrounding the vascular tissue. In the fruit vesicles, expression is restricted to the peripheral cell layers and stalk cells. High levels of expression are detected in the core matrix.

It is found in the secreted. It localises to the cell wall. It carries out the reaction [(1-&gt;4)-alpha-D-galacturonosyl methyl ester](n) + n H2O = [(1-&gt;4)-alpha-D-galacturonosyl](n) + n methanol + n H(+). Its pathway is glycan metabolism; pectin degradation; 2-dehydro-3-deoxy-D-gluconate from pectin: step 1/5. In terms of biological role, acts in the modification of cell walls via demethylesterification of cell wall pectin. This is Pectinesterase 3 from Citrus sinensis (Sweet orange).